We begin with the raw amino-acid sequence, 819 residues long: Leucine--tRNA ligase (819 aa).

Residues 40 to 51 (PYPSGAGLHVGH) carry the 'HIGH' region motif. The short motif at 600-604 (KMSKS) is the 'KMSKS' region element. Lys603 contributes to the ATP binding site.

The protein belongs to the class-I aminoacyl-tRNA synthetase family.

The protein localises to the cytoplasm. The catalysed reaction is tRNA(Leu) + L-leucine + ATP = L-leucyl-tRNA(Leu) + AMP + diphosphate. The sequence is that of Leucine--tRNA ligase from Chlamydia muridarum (strain MoPn / Nigg).